We begin with the raw amino-acid sequence, 234 residues long: Large ribosomal subunit protein uL1 (234 aa).

Belongs to the universal ribosomal protein uL1 family. Part of the 50S ribosomal subunit.

Functionally, binds directly to 23S rRNA. The L1 stalk is quite mobile in the ribosome, and is involved in E site tRNA release. Protein L1 is also a translational repressor protein, it controls the translation of the L11 operon by binding to its mRNA. This chain is Large ribosomal subunit protein uL1, found in Helicobacter acinonychis (strain Sheeba).